The sequence spans 141 residues: Large ribosomal subunit protein uL16c (141 aa).

Residues 1 to 17 (MLSPRRTKYRKQHRGRL) are compositionally biased toward basic residues. The tract at residues 1-20 (MLSPRRTKYRKQHRGRLKGT) is disordered.

It belongs to the universal ribosomal protein uL16 family. As to quaternary structure, part of the 50S ribosomal subunit.

The protein resides in the plastid. It is found in the chloroplast. In Staurastrum punctulatum (Green alga), this protein is Large ribosomal subunit protein uL16c.